We begin with the raw amino-acid sequence, 147 residues long: 3-dehydroquinate dehydratase 1 (147 aa).

Residue Tyr-23 is the Proton acceptor of the active site. Positions 75, 81, and 88 each coordinate substrate. His-101 serves as the catalytic Proton donor. Substrate-binding positions include Leu-102–Ser-103 and Arg-112.

It belongs to the type-II 3-dehydroquinase family. Homododecamer.

The enzyme catalyses 3-dehydroquinate = 3-dehydroshikimate + H2O. Its pathway is metabolic intermediate biosynthesis; chorismate biosynthesis; chorismate from D-erythrose 4-phosphate and phosphoenolpyruvate: step 3/7. Functionally, catalyzes a trans-dehydration via an enolate intermediate. This chain is 3-dehydroquinate dehydratase 1 (aroQ1), found in Pseudomonas aeruginosa (strain ATCC 15692 / DSM 22644 / CIP 104116 / JCM 14847 / LMG 12228 / 1C / PRS 101 / PAO1).